The primary structure comprises 252 residues: Sulfoacetaldehyde reductase 2 (252 aa).

6–30 (LITGATSGFGRAAARRFADAGWSLI) contributes to the NADP(+) binding site. Substrate is bound at residue Ser139. Tyr152 serves as the catalytic Proton acceptor.

This sequence belongs to the short-chain dehydrogenases/reductases (SDR) family. In terms of assembly, homodimer and heterotetramer.

It carries out the reaction 2-hydroxyethane-1-sulfonate + NADP(+) = sulfoacetaldehyde + NADPH + H(+). It participates in organosulfur degradation. Its function is as follows. Catalyzes the formation of isethionate from 2-sulfoacetaldehyde in the deaminative pathway of taurine. Constitutively expressed enzyme that only mediates a small part of the activity observed in taurine-grown cells. The polypeptide is Sulfoacetaldehyde reductase 2 (isfD2) (Chromohalobacter salexigens (strain ATCC BAA-138 / DSM 3043 / CIP 106854 / NCIMB 13768 / 1H11)).